The sequence spans 492 residues: MWKQILSKLPKKSSSKNHSSSSSSTSKSSDNGASKSGNSQTQNAPPVKPSADSGFKEGNLKGNGNGFTPYEALPGFKDVPNAEKQNLFVRKLSLCCVVFDFSDPTKNVKEKDIKRQTLLELVDYVASPNGKFSETVIQEVVRMVSVNIFRTLNPQPRENKVIDALDLEEEEPSMDPTWPHLQLVYEILLRLIASPETDTKLAKKYIDQSFVSRLLDLFDSEDPRERDCLKTVLHRIYGKFMVHRPFIRKSINNIFYRFVFETEKHNGIAEFLEILGSIINGFALPLKDEHKVFLVRALVPLHKPKSLQMYHQQLSYCITQFVEKDCKLADTVIRGLLKSWPVTNSSKEVMFLNELEEVLEATQPPEFQRCMVPLFRQVARCLNSLHFQVAERALFLWNNDHIENLIMQNRKVILPIIFPALERNTQKHWNQAVHSLTLNVQKIFNDIDAELFKDCLAKFREDESKEAEIGAKREATWKRLEEIGNQKQKSSL.

The interval 1 to 63 (MWKQILSKLP…GFKEGNLKGN (63 aa)) is disordered. Residues 16-39 (KNHSSSSSSTSKSSDNGASKSGNS) are compositionally biased toward low complexity. The Microbody targeting signal signature appears at 490–492 (SSL).

Belongs to the phosphatase 2A regulatory subunit B56 family. As to quaternary structure, PP2A consists of a common heteromeric enzyme, composed of a catalytic subunit (subunits C), a constant regulatory subunit (subunit A), and a variety of regulatory subunits such as subunits B (the R2/B/PR55/B55, R3/B''/PR72/PR130/PR59 and R5/B'/B56 families). Interacts with BZR1. Interacts with PP2A2, PP2A5 and PP2AA2. As to expression, highly expressed in dry seeds. Expressed in roots, cotyledons, rosette leaves and flowers.

The protein resides in the cytoplasm. Its subcellular location is the cytosol. The protein localises to the peroxisome. In terms of biological role, the B regulatory subunit may modulate substrate selectivity and catalytic activity, and may also direct the localization of the catalytic enzyme to a particular subcellular compartment. Associates with the serine/threonine-protein phosphatase PP2A catalytic subunit C and regulatory subunit A to positively regulates beta-oxidation of fatty acids and protoauxins in peroxisomes by dephosphorylating peroxisomal beta-oxidation-related proteins. Required for the formation of the PP2A holoenzyme that negatively regulates brassinosteroid signaling by dephosphorylating and inactivating BRI1 in the cytoplasm. This chain is Serine/threonine protein phosphatase 2A 57 kDa regulatory subunit B' theta isoform (B'THETA), found in Arabidopsis thaliana (Mouse-ear cress).